The sequence spans 101 residues: NAD(P)H-quinone oxidoreductase subunit 4L, chloroplastic (101 aa).

3 consecutive transmembrane segments (helical) span residues 2 to 22, 32 to 52, and 61 to 81; these read MFEH…YGLI, ICLE…SDLF, and IFAI…LSIL.

This sequence belongs to the complex I subunit 4L family. NDH is composed of at least 16 different subunits, 5 of which are encoded in the nucleus.

It is found in the plastid. The protein resides in the chloroplast thylakoid membrane. It carries out the reaction a plastoquinone + NADH + (n+1) H(+)(in) = a plastoquinol + NAD(+) + n H(+)(out). The enzyme catalyses a plastoquinone + NADPH + (n+1) H(+)(in) = a plastoquinol + NADP(+) + n H(+)(out). Its function is as follows. NDH shuttles electrons from NAD(P)H:plastoquinone, via FMN and iron-sulfur (Fe-S) centers, to quinones in the photosynthetic chain and possibly in a chloroplast respiratory chain. The immediate electron acceptor for the enzyme in this species is believed to be plastoquinone. Couples the redox reaction to proton translocation, and thus conserves the redox energy in a proton gradient. The protein is NAD(P)H-quinone oxidoreductase subunit 4L, chloroplastic of Agrostis stolonifera (Creeping bentgrass).